A 313-amino-acid chain; its full sequence is Solute carrier family 35 member E3 (313 aa).

9 helical membrane-spanning segments follow: residues 17–37, 40–60, 71–91, 126–146, 154–174, 187–206, 225–245, 252–272, and 275–295; these read GLLF…WIYV, GFPN…GLYI, SLPL…VVFT, FSVR…LNSY, LGMV…VWVG, LLYY…VPFF, LMVL…YWII, TYNM…YILF, and PLSV…LTYT.

This sequence belongs to the TPT transporter family. SLC35E subfamily.

Its subcellular location is the membrane. In terms of biological role, putative transporter. This chain is Solute carrier family 35 member E3 (Slc35e3), found in Mus musculus (Mouse).